Here is a 493-residue protein sequence, read N- to C-terminus: Glutamyl-tRNA(Gln) amidotransferase subunit A (493 aa).

Active-site charge relay system residues include lysine 79 and serine 159. Serine 183 (acyl-ester intermediate) is an active-site residue.

It belongs to the amidase family. GatA subfamily. Heterotrimer of A, B and C subunits.

It carries out the reaction L-glutamyl-tRNA(Gln) + L-glutamine + ATP + H2O = L-glutaminyl-tRNA(Gln) + L-glutamate + ADP + phosphate + H(+). Its function is as follows. Allows the formation of correctly charged Gln-tRNA(Gln) through the transamidation of misacylated Glu-tRNA(Gln) in organisms which lack glutaminyl-tRNA synthetase. The reaction takes place in the presence of glutamine and ATP through an activated gamma-phospho-Glu-tRNA(Gln). This is Glutamyl-tRNA(Gln) amidotransferase subunit A from Brucella canis (strain ATCC 23365 / NCTC 10854 / RM-666).